Here is a 729-residue protein sequence, read N- to C-terminus: Putative cyclic nucleotide-gated ion channel 19 (729 aa).

The Cytoplasmic portion of the chain corresponds to 1-172 (MAHTRTFTSR…SKFVQVWTRV (172 aa)). A disordered region spans residues 52–82 (SGPIHSTRRTEPLFSPSPQESPDSSSTVDVP). A compositionally biased stretch (low complexity) spans 67 to 81 (PSPQESPDSSSTVDV). Residues 173–193 (LAFSSLVAIFIDPLFFFLLLI) traverse the membrane as a helical segment. At 194–208 (QQDNKCIAIDWRATK) the chain is on the extracellular side. A helical transmembrane segment spans residues 209–229 (VLVSLRSITDLIFFINILLQF). Residues 230–261 (RLAYVAPESRIVGAGQLVDHPRKIARHYFRGK) lie on the Cytoplasmic side of the membrane. The helical transmembrane segment at 262–282 (FLLDMFIVFPIPQIMILRIIP) threads the bilayer. The Extracellular portion of the chain corresponds to 283–295 (LHLGTRREESEKQ). Residues 296 to 316 (ILRATVLFQYIPKLYRLLPLL) form a helical membrane-spanning segment. Topologically, residues 317–332 (AGQTSTGFIFESAWAN) are cytoplasmic. Residues 333 to 353 (FVINLLTFMLAGHAVGSCWYL) traverse the membrane as a helical segment. At 354-451 (SALQRVKKCM…STLAGNLSPS (98 aa)) the chain is on the extracellular side. Residues 452–472 (YSVGEVFFTMGIIGLGLLLFA) traverse the membrane as a helical segment. Residues 473 to 729 (RLIGNMHNFL…LNTAHSNSNR (257 aa)) are Cytoplasmic-facing. Residues 560 to 677 (IFSL…VTSL) and E625 each bind a nucleoside 3',5'-cyclic phosphate. The interval 678 to 694 (FSRFLRSHRVQGAIRYE) is calmodulin-binding. The IQ domain maps to 699-728 (RLRAAMQIQVAWRYRKRQLQRLNTAHSNSN).

Belongs to the cyclic nucleotide-gated cation channel (TC 1.A.1.5) family. Homotetramer or heterotetramer.

Its subcellular location is the cell membrane. In terms of biological role, putative cyclic nucleotide-gated ion channel. The sequence is that of Putative cyclic nucleotide-gated ion channel 19 (CNGC19) from Arabidopsis thaliana (Mouse-ear cress).